The following is a 325-amino-acid chain: Melanocortin receptor 5 (325 aa).

Topologically, residues 1-37 (MNSSFHLHFLDLGLNTTDGNLSGLSVQNASSLCEDMG) are extracellular. N-linked (GlcNAc...) asparagine glycosylation is found at Asn-2, Asn-15, Asn-20, and Asn-28. Residues 38 to 61 (IAVEVFLALGLISLLENILVIGAI) form a helical membrane-spanning segment. Topologically, residues 62–73 (VRNRNLHTPMYF) are cytoplasmic. A helical transmembrane segment spans residues 74–97 (FVGSLAVADMLVSLSNSWETITIY). Residues 98-114 (LLTNKHLVMADASVRHL) lie on the Extracellular side of the membrane. Residues 115-138 (DNVFDSMICISVVASMCSLLAIAV) traverse the membrane as a helical segment. Residues 139–155 (DRYVTIFCALRYQRIMT) are Cytoplasmic-facing. Residues 156 to 179 (GRRSGAIIGGIWAFCASCGTVFIV) traverse the membrane as a helical segment. The Extracellular portion of the chain corresponds to 180-186 (YYESTYV). The chain crosses the membrane as a helical span at residues 187-211 (VICLIAMFLTMLLLMASLYTHMFLL). The Cytoplasmic portion of the chain corresponds to 212-239 (ARTHIRRIATLPGHSSVRQRTGVKGAIT). A helical transmembrane segment spans residues 240-265 (LAMLLGVFIVCWAPFFLHLILMISCP). Residues 266–273 (HNLYCSCF) lie on the Extracellular side of the membrane. The helical transmembrane segment at 274 to 297 (MSHFNMYLILIMCNSVIDPLIYAF) threads the bilayer. The Cytoplasmic portion of the chain corresponds to 298 to 325 (RSQEMRKTFKEIVCFQSFRTPCRFPSRY). A lipid anchor (S-palmitoyl cysteine) is attached at Cys-311.

It belongs to the G-protein coupled receptor 1 family.

The protein localises to the cell membrane. Functionally, receptor for MSH (alpha, beta and gamma) and ACTH. The activity of this receptor is mediated by G proteins which activate adenylate cyclase. This receptor is a possible mediator of the immunomodulation properties of melanocortins. This is Melanocortin receptor 5 (MC5R) from Bos taurus (Bovine).